A 275-amino-acid chain; its full sequence is Elongation factor Ts (275 aa).

The tract at residues Thr76–Val79 is involved in Mg(2+) ion dislocation from EF-Tu.

This sequence belongs to the EF-Ts family.

It localises to the cytoplasm. In terms of biological role, associates with the EF-Tu.GDP complex and induces the exchange of GDP to GTP. It remains bound to the aminoacyl-tRNA.EF-Tu.GTP complex up to the GTP hydrolysis stage on the ribosome. The protein is Elongation factor Ts of Salinispora tropica (strain ATCC BAA-916 / DSM 44818 / JCM 13857 / NBRC 105044 / CNB-440).